Reading from the N-terminus, the 88-residue chain is UPF0250 protein Swoo_3713 (88 aa).

It belongs to the UPF0250 family.

The chain is UPF0250 protein Swoo_3713 from Shewanella woodyi (strain ATCC 51908 / MS32).